Here is a 91-residue protein sequence, read N- to C-terminus: DNA-directed RNA polymerase subunit omega (91 aa).

It belongs to the RNA polymerase subunit omega family. The RNAP catalytic core consists of 2 alpha, 1 beta, 1 beta' and 1 omega subunit. When a sigma factor is associated with the core the holoenzyme is formed, which can initiate transcription.

It catalyses the reaction RNA(n) + a ribonucleoside 5'-triphosphate = RNA(n+1) + diphosphate. Promotes RNA polymerase assembly. Latches the N- and C-terminal regions of the beta' subunit thereby facilitating its interaction with the beta and alpha subunits. In Aeromonas hydrophila subsp. hydrophila (strain ATCC 7966 / DSM 30187 / BCRC 13018 / CCUG 14551 / JCM 1027 / KCTC 2358 / NCIMB 9240 / NCTC 8049), this protein is DNA-directed RNA polymerase subunit omega.